We begin with the raw amino-acid sequence, 397 residues long: Acetate kinase (397 aa).

Residue Asn-7 participates in Mg(2+) binding. Lys-14 is a binding site for ATP. Residue Arg-91 participates in substrate binding. Asp-147 (proton donor/acceptor) is an active-site residue. ATP contacts are provided by residues 207 to 211 (HLGNG), 282 to 284 (DFR), and 330 to 334 (GLGEN). Residue Glu-383 coordinates Mg(2+).

Belongs to the acetokinase family. Homodimer. Requires Mg(2+) as cofactor. The cofactor is Mn(2+).

Its subcellular location is the cytoplasm. It carries out the reaction acetate + ATP = acetyl phosphate + ADP. It participates in metabolic intermediate biosynthesis; acetyl-CoA biosynthesis; acetyl-CoA from acetate: step 1/2. Its function is as follows. Catalyzes the formation of acetyl phosphate from acetate and ATP. Can also catalyze the reverse reaction. This chain is Acetate kinase, found in Moorella thermoacetica (strain ATCC 39073 / JCM 9320).